We begin with the raw amino-acid sequence, 346 residues long: Ly6/PLAUR domain-containing protein 3 (346 aa).

Residues 1–30 (MDPARKAGAQAMIWTAGWLLLLLLRGGAQA) form the signal peptide. 2 consecutive UPAR/Ly6 domains span residues 33–126 (CYSC…ALDP) and 140–222 (CYSC…SRCN). 4 N-linked (GlcNAc...) asparagine glycosylation sites follow: asparagine 118, asparagine 163, asparagine 176, and asparagine 183. Residues 233-324 (PRIPPLVRLP…KGGPQQPHNK (92 aa)) form a disordered region. Positions 234 to 246 (RIPPLVRLPPPEP) are enriched in pro residues. Residues 247 to 269 (TTVASTTSVTTSTSAPVRPTSTT) are compositionally biased toward low complexity. Residues 283–295 (GVEHEASRDEEPR) show a composition bias toward basic and acidic residues. The GPI-anchor amidated cysteine moiety is linked to residue cysteine 326. Residues 327-346 (VAPTAGLAALLLAVAAGVLL) constitute a propeptide, removed in mature form.

Binds laminin-1 and laminin-5. Interacts with LGALS3. Interacts with AGR2 and AGR3. In terms of processing, N-glycosylated and O-glycosylated. In terms of tissue distribution, expressed in placenta, skin and urothelium. Found in suprabasal keratinocytes of chronic wounds. Weak expression is found in esophagus and peripheral blood mononuclear cells. Found in the majority of primary and metastatic transitional cell carcinomas (TCCs) and as well in breast cancer tissues, but not in adjacent normal tissues. High expression is found in the tumor component of some noninvasive superficial lesions and in invasive and metastatic urothelial cancers.

It localises to the cell membrane. In terms of biological role, supports cell migration. May be involved in urothelial cell-matrix interactions. May be involved in tumor progression. The chain is Ly6/PLAUR domain-containing protein 3 (LYPD3) from Homo sapiens (Human).